Here is a 122-residue protein sequence, read N- to C-terminus: Large ribosomal subunit protein uL14 (122 aa).

Belongs to the universal ribosomal protein uL14 family. As to quaternary structure, part of the 50S ribosomal subunit. Forms a cluster with proteins L3 and L19. In the 70S ribosome, L14 and L19 interact and together make contacts with the 16S rRNA in bridges B5 and B8.

Its function is as follows. Binds to 23S rRNA. Forms part of two intersubunit bridges in the 70S ribosome. This Desulforamulus reducens (strain ATCC BAA-1160 / DSM 100696 / MI-1) (Desulfotomaculum reducens) protein is Large ribosomal subunit protein uL14.